The following is a 129-amino-acid chain: Glycine cleavage system H protein (129 aa).

The region spanning Leu-24–Arg-106 is the Lipoyl-binding domain. Lys-65 bears the N6-lipoyllysine mark.

This sequence belongs to the GcvH family. The glycine cleavage system is composed of four proteins: P, T, L and H. It depends on (R)-lipoate as a cofactor.

The glycine cleavage system catalyzes the degradation of glycine. The H protein shuttles the methylamine group of glycine from the P protein to the T protein. This Parasynechococcus marenigrum (strain WH8102) protein is Glycine cleavage system H protein.